The chain runs to 29 residues: Cytochrome b6-f complex subunit 8 (29 aa).

Residues 3–23 traverse the membrane as a helical segment; the sequence is IITFGWVAVAAFFALSIAFVV.

Belongs to the PetN family. In terms of assembly, the 4 large subunits of the cytochrome b6-f complex are cytochrome b6, subunit IV (17 kDa polypeptide, PetD), cytochrome f and the Rieske protein, while the 4 small subunits are PetG, PetL, PetM and PetN. The complex functions as a dimer.

It localises to the cellular thylakoid membrane. Its function is as follows. Component of the cytochrome b6-f complex, which mediates electron transfer between photosystem II (PSII) and photosystem I (PSI), cyclic electron flow around PSI, and state transitions. The chain is Cytochrome b6-f complex subunit 8 from Synechococcus sp. (strain JA-3-3Ab) (Cyanobacteria bacterium Yellowstone A-Prime).